The primary structure comprises 369 residues: MSSRGGKKKSTKTSRSAKAGVIFPVGRMLRYIKKGHPKYRIGVGAPVYMAAVLEYLTAEILELAGNAARDNKKGRVTPRHILLAVANDEELNQLLKGVTIASGGVLPNIHPELLAKKRGSKGKLEAIITPPPAKKAKSPSQKKTVSKKTGGKKGARKSKKKQGEVSKSASADSTTEGTPADGFTVLSTKSLFLGQKLQVVQADIATIDSDAVVHPTNSDFYTGGEVGSTLEKKGGKEFVEAVIELRKKNGPLDIAGAVVSAGHGLPAKFVIHCNSPGWGSDKCEELLEKTVKNCLALADEKKLKSIAFPSIGSGRNGFPKQTAAQLILKAISSYFVSTMSSSIKTVYFVLFDSESIGIYVQEMAKLDAN.

N6-lactoyllysine; alternate is present on residues Lys7 and Lys9. In terms of domain architecture, Histone H2A spans 15–90 (RSAKAGVIFP…ILLAVANDEE (76 aa)). Lys18 is subject to N6-methyllysine. Position 116 is an N6-acetyllysine; alternate (Lys116). Lys116 participates in a covalent cross-link: Glycyl lysine isopeptide (Lys-Gly) (interchain with G-Cter in ubiquitin); alternate. Residue Lys117 forms a Glycyl lysine isopeptide (Lys-Gly) (interchain with G-Cter in ubiquitin) linkage. Position 123 is an N6-acetyllysine; alternate (Lys123). Lys123 is modified (N6,N6-dimethyllysine; alternate). Residue Lys123 forms a Glycyl lysine isopeptide (Lys-Gly) (interchain with G-Cter in SUMO2); alternate linkage. Residues 128–180 (ITPPPAKKAKSPSQKKTVSKKTGGKKGARKSKKKQGEVSKSASADSTTEGTPA) are disordered. A Phosphothreonine modification is found at Thr129. A compositionally biased stretch (basic residues) spans 144–160 (TVSKKTGGKKGARKSKK). Residues 165-177 (VSKSASADSTTEG) are compositionally biased toward polar residues. A Glycyl lysine isopeptide (Lys-Gly) (interchain with G-Cter in SUMO2) cross-link involves residue Lys167. Phosphoserine occurs at positions 170 and 173. Residue Thr178 is modified to Phosphothreonine. The Macro domain occupies 184 to 367 (TVLSTKSLFL…IYVQEMAKLD (184 aa)). Residue Lys189 forms a Glycyl lysine isopeptide (Lys-Gly) (interchain with G-Cter in SUMO2) linkage. Positions 203, 204, 226, 275, 312, 313, 314, and 316 each coordinate a glycoprotein. Lys320 participates in a covalent cross-link: Glycyl lysine isopeptide (Lys-Gly) (interchain with G-Cter in SUMO2).

The protein belongs to the histone H2A family. In terms of assembly, the nucleosome is a histone octamer containing two molecules each of H2A, H2B, H3 and H4 assembled in one H3-H4 heterotetramer and two H2A-H2B heterodimers. In terms of processing, ADP-ribosylated. Monoubiquitinated at either Lys-116 or Lys-117. May also be polyubiquitinated. Ubiquitination is mediated by the CUL3/SPOP E3 complex and does not promote proteasomal degradation. Instead, it is required for enrichment in inactive X chromosome chromatin. Present in liver (at protein level).

Its subcellular location is the nucleus. The protein resides in the chromosome. Its function is as follows. Variant histone H2A which replaces conventional H2A in a subset of nucleosomes where it represses transcription. Nucleosomes wrap and compact DNA into chromatin, limiting DNA accessibility to the cellular machineries which require DNA as a template. Histones thereby play a central role in transcription regulation, DNA repair, DNA replication and chromosomal stability. DNA accessibility is regulated via a complex set of post-translational modifications of histones, also called histone code, and nucleosome remodeling. In terms of biological role, isoform that specifically binds poly-ADP-ribose and O-acetyl-ADP-ribose and plays a key role in NAD(+) metabolism. Able to bind to the ends of poly-ADP-ribose chains created by PARP1 and cap them. This prevents PARP1 from further addition of ADP-ribose and thus limits the consumption of nuclear NAD(+), allowing the cell to maintain proper NAD(+) levels in both the nucleus and the mitochondria to promote proper mitochondrial respiration. In contrast to isoform 1, does not bind poly-ADP-ribose. The chain is Core histone macro-H2A.1 from Gallus gallus (Chicken).